A 40-amino-acid polypeptide reads, in one-letter code: Natriuretic peptide TNPd (40 aa).

A disulfide bridge links C9 with C25.

It belongs to the natriuretic peptide family. Expressed by the venom gland.

It localises to the secreted. In terms of biological role, snake venom natriuretic peptide that exhibits vasoactive and hypotensive activity. Stimulates cGMP production through the natriuretic peptide receptor 1 (NPR1) with very high potencies for the rat NPR1 (EC(50)=18 nM), and very weak potencies over human NPR1 (30% activation at 10 uM). The sequence is that of Natriuretic peptide TNPd from Oxyuranus microlepidotus (Inland taipan).